Here is a 77-residue protein sequence, read N- to C-terminus: uncharacterized protein (77 aa).

Residues 13-33 traverse the membrane as a helical segment; that stretch reads VPVIRLSVFLHFFFVFPFCLL.

It localises to the membrane. This is an uncharacterized protein from Saccharomyces cerevisiae (strain ATCC 204508 / S288c) (Baker's yeast).